We begin with the raw amino-acid sequence, 115 residues long: Cytochrome c oxidase assembly protein COX16 homolog, mitochondrial (115 aa).

At 1-6 (MSRLKF) the chain is on the mitochondrial matrix side. The chain crosses the membrane as a helical span at residues 7-29 (VRVGLPFFAIVLGSAYGLHFFQQ). Residues 30–115 (VRFDFRKIKQ…RKVRELKSNV (86 aa)) are Mitochondrial intermembrane-facing.

Belongs to the COX16 family.

It localises to the mitochondrion inner membrane. Required for the assembly of the mitochondrial respiratory chain complex IV (CIV), also known as cytochrome c oxidase. This Caenorhabditis elegans protein is Cytochrome c oxidase assembly protein COX16 homolog, mitochondrial.